The chain runs to 112 residues: MTQEIYEYANKIERALRNLPEYKKVVAAKEDIEKDSEASNIFEEFFKLQAKLKEMIQNGQTPSNEEQETIHQLSSKIESNELLKAYFEAQQSLSVYINDIERIIFNPLKDLI.

This sequence belongs to the UPF0342 family.

The chain is UPF0342 protein SUB0718 from Streptococcus uberis (strain ATCC BAA-854 / 0140J).